The following is a 396-amino-acid chain: MAKEEFAREKPHVNVGTIGHVDHGKTTLTAAITKVLAERVGGAAEQTFEAIDNAPEERERGITIATSHVEYETENRHYAHVDCPGHADYVKNMVTGAAQMDGAILVVGSDDGPMPQTREHILLARQVGVPYLVVFMNKTDLVDDAELLELVEMEVRELLTEYEFPGDEVPVVRGSALQALESSEEHEEKIMELMEAVDEYIPTPERDVEKPFLMPVEDIFSITGRGTVVTGRIERGRVQLQDEIEIVGMQEEKMDSVVTGIEMFNKTLEEGEAGDNAGILLRGIEKEEVKRGMVLAEPGTVTPHKEFECEVYVLSKEEGGRHTPFFDGYQPQFYFRTTDVTGSIELPEGVEMVMPGDNATFEGSLIEPVALEEGLRFAIREGGHTVGAGVVTDILD.

The tr-type G domain maps to 10–205 (KPHVNVGTIG…AVDEYIPTPE (196 aa)). The segment at 19-26 (GHVDHGKT) is G1. Position 19–26 (19–26 (GHVDHGKT)) interacts with GTP. Position 26 (Thr-26) interacts with Mg(2+). The G2 stretch occupies residues 61–65 (GITIA). Residues 82 to 85 (DCPG) form a G3 region. GTP contacts are provided by residues 82–86 (DCPGH) and 137–140 (NKTD). The G4 stretch occupies residues 137 to 140 (NKTD). The tract at residues 175-177 (SAL) is G5.

Belongs to the TRAFAC class translation factor GTPase superfamily. Classic translation factor GTPase family. EF-Tu/EF-1A subfamily. In terms of assembly, monomer.

Its subcellular location is the cytoplasm. It catalyses the reaction GTP + H2O = GDP + phosphate + H(+). GTP hydrolase that promotes the GTP-dependent binding of aminoacyl-tRNA to the A-site of ribosomes during protein biosynthesis. The sequence is that of Elongation factor Tu from Salinibacter ruber (strain DSM 13855 / M31).